A 417-amino-acid chain; its full sequence is MASCGPSNALQNLSKHASADRSLQHDRMAPGGAPGAQRQQFRSQTQGGQLNNEFQQFAQAGPAHNSFEQSQMGPHFGQQHFGQPHQPQMGQHAPMAHGQQSDWAQSFSQLNLGPQTGPQHTQQSNWGQDFMRQSPQSHQVQPQMANGVMGSMSGMSSFGPMYSNSQLMNSTYGLQTEHQQTHKTETKSSQDAAFEAAFGAVEESITKTSDKGKEVEKDPMEQTYRYDQADALNRQAEHISDNISREEVDIKTDENGEFASIARQIASSLEEADKSKFEKSTFMNLMRRIGNHEVTLDGDKLVNKEGEDIREEVRDELLREGASQENGFQSEAQQTAPLPVHHEAPPPEQIHPHTETGDKQLEDPMVYIEQEAARRAAESGRTVEEEKLNFYSPFEYAQKLGPQGVAKQSNWEEDYDF.

The segment covering 1-15 has biased composition (polar residues); that stretch reads MASCGPSNALQNLSK. Disordered regions lie at residues 1–47 and 65–101; these read MASC…QTQG and NSFEQSQMGPHFGQQHFGQPHQPQMGQHAPMAHGQQS. Residue Cys-4 forms a Glycyl cysteine thioester (Cys-Gly) (interchain with G-Cter in ubiquitin) linkage. Lys-15 is covalently cross-linked (Glycyl lysine isopeptide (Lys-Gly) (interchain with G-Cter in ubiquitin)). A compositionally biased stretch (basic and acidic residues) spans 17–28; that stretch reads ASADRSLQHDRM. Residues 37 to 47 are compositionally biased toward polar residues; that stretch reads QRQQFRSQTQG. Residues 71 to 92 show a composition bias toward low complexity; the sequence is QMGPHFGQQHFGQPHQPQMGQH. 2 short sequence motifs (wxxxF/Y motif) span residues 103–107 and 126–130; these read WAQSF and WGQDF. Positions 321–361 are disordered; the sequence is GASQENGFQSEAQQTAPLPVHHEAPPPEQIHPHTETGDKQL. Residues 323–336 show a composition bias toward polar residues; that stretch reads SQENGFQSEAQQTA. Over residues 340-361 the composition is skewed to basic and acidic residues; sequence VHHEAPPPEQIHPHTETGDKQL. The WxxxF/Y motif 2 signature appears at 411 to 415; sequence WEEDY.

This sequence belongs to the peroxisomal targeting signal receptor family. Interacts (via WxxxF/Y and LVxEF motifs) with PEX14; promoting translocation through the PEX13-PEX14 docking complex. Interacts with PEX7. Post-translationally, monoubiquitinated at Cys-4 by PEX2 during PEX20 passage through the PEX2-PEX10-PEX12 retrotranslocation channel: monoubiquitination acts as a signal for PEX20 extraction and is required for proper export from peroxisomes and recycling. When PEX5 recycling is compromised, polyubiquitinated at Lys-15 by PEX10 during its passage through the retrotranslocation channel, leading to its degradation.

The protein localises to the cytoplasm. Its subcellular location is the cytosol. It localises to the peroxisome matrix. In terms of biological role, coreceptor required for the peroxisomal import of proteins containing a C-terminal PTS2-type peroxisomal targeting signal, such as 3-oxoacyl-CoA thiolase. Acts via its interaction with PEX7, promoting association between PEX7 bound to cargo proteins and the PEX13-PEX14 docking complex. PEX20 along with PEX7 and PTS2-containing cargo proteins are tranlocated into peroxisomes by passing through the PEX13-PEX14 docking complex. PEX20 coreceptor is then retrotranslocated into the cytosol, leading to release of bound cargo in the peroxisome matrix, and reset for a subsequent peroxisome import cycle. Also mediates peroxisomal import of proteins that do not contain PTS1- or PTS2-type peroxisomal targeting signals, such as acyl-CoA oxidases (Aox) izozymes. Import of acyl-CoA oxidases (Aox) izozymes is independent of PEX7. The polypeptide is Peroxisome biogenesis protein 20 (PEX20) (Yarrowia lipolytica (strain CLIB 122 / E 150) (Yeast)).